Here is a 364-residue protein sequence, read N- to C-terminus: Mannose-1-phosphate guanyltransferase (364 aa).

It belongs to the transferase hexapeptide repeat family.

The protein localises to the cytoplasm. It carries out the reaction alpha-D-mannose 1-phosphate + GTP + H(+) = GDP-alpha-D-mannose + diphosphate. The protein operates within nucleotide-sugar biosynthesis; GDP-alpha-D-mannose biosynthesis; GDP-alpha-D-mannose from alpha-D-mannose 1-phosphate (GTP route): step 1/1. Involved in cell wall synthesis where it is required for glycosylation. Involved in cell cycle progression through cell-size checkpoint. This chain is Mannose-1-phosphate guanyltransferase (MPG1), found in Cryptococcus neoformans var. neoformans serotype D (strain B-3501A) (Filobasidiella neoformans).